The sequence spans 285 residues: DegV domain-containing protein CA_C3284 (285 aa).

The region spanning 3-280 is the DegV domain; the sequence is VKILTDSTSC…PGAIGIAYYT (278 aa). Residues S59 and S91 each coordinate hexadecanoate.

May bind long-chain fatty acids, such as palmitate, and may play a role in lipid transport or fatty acid metabolism. This Clostridium acetobutylicum (strain ATCC 824 / DSM 792 / JCM 1419 / IAM 19013 / LMG 5710 / NBRC 13948 / NRRL B-527 / VKM B-1787 / 2291 / W) protein is DegV domain-containing protein CA_C3284.